Consider the following 248-residue polypeptide: Triosephosphate isomerase (248 aa).

Residues N11 and K13 each coordinate substrate. H95 functions as the Electrophile in the catalytic mechanism. E165 functions as the Proton acceptor in the catalytic mechanism.

This sequence belongs to the triosephosphate isomerase family. In terms of assembly, homodimer.

The protein resides in the cytoplasm. The catalysed reaction is dihydroxyacetone phosphate = methylglyoxal + phosphate. It carries out the reaction D-glyceraldehyde 3-phosphate = dihydroxyacetone phosphate. It participates in carbohydrate degradation; glycolysis; D-glyceraldehyde 3-phosphate from glycerone phosphate: step 1/1. The protein operates within carbohydrate biosynthesis; gluconeogenesis. Triosephosphate isomerase is an extremely efficient metabolic enzyme that catalyzes the interconversion between dihydroxyacetone phosphate (DHAP) and D-glyceraldehyde-3-phosphate (G3P) in glycolysis and gluconeogenesis. Its function is as follows. It is also responsible for the non-negligible production of methylglyoxal a reactive cytotoxic side-product that modifies and can alter proteins, DNA and lipids. This chain is Triosephosphate isomerase (TPI1), found in Gallus gallus (Chicken).